The primary structure comprises 357 residues: GTPase Obg (357 aa).

The 159-residue stretch at 1-159 (MKFVDEAFID…RNLKLELKVL (159 aa)) folds into the Obg domain. The region spanning 160 to 334 (ADVGLLGMPN…LIQAIYQHVR (175 aa)) is the OBG-type G domain. GTP contacts are provided by residues 166–173 (GMPNAGKS), 191–195 (FTTLH), 213–216 (DIPG), 284–287 (NKLD), and 315–317 (SAL). Residues Ser173 and Thr193 each coordinate Mg(2+).

The protein belongs to the TRAFAC class OBG-HflX-like GTPase superfamily. OBG GTPase family. In terms of assembly, monomer. Requires Mg(2+) as cofactor.

Its subcellular location is the cytoplasm. Functionally, an essential GTPase which binds GTP, GDP and possibly (p)ppGpp with moderate affinity, with high nucleotide exchange rates and a fairly low GTP hydrolysis rate. Plays a role in control of the cell cycle, stress response, ribosome biogenesis and in those bacteria that undergo differentiation, in morphogenesis control. The sequence is that of GTPase Obg from Paracidovorax citrulli (strain AAC00-1) (Acidovorax citrulli).